Consider the following 298-residue polypeptide: Probable aspartoacylase (298 aa).

The Zn(2+) site is built by His13 and Glu16. Residues Arg54 and 61-62 (NR) each bind substrate. Position 103 (His103) interacts with Zn(2+). The substrate site is built by Glu161 and Tyr271.

This sequence belongs to the AspA/AstE family. Aspartoacylase subfamily. Zn(2+) is required as a cofactor.

The enzyme catalyses an N-acyl-L-aspartate + H2O = a carboxylate + L-aspartate. The sequence is that of Probable aspartoacylase from Prochlorococcus marinus (strain MIT 9515).